We begin with the raw amino-acid sequence, 530 residues long: uncharacterized protein (530 aa).

5 helical membrane-spanning segments follow: residues 4–23 (FLAA…GLAI), 28–47 (LFGV…VVST), 57–79 (FVFQ…PAFF), 91–113 (LFMI…AFGL), and 148–170 (VIGY…AVGA). The 85-residue stretch at 260–344 (LGGECDTKIE…MGEVRRFLGD (85 aa)) folds into the RCK C-terminal domain. 4 helical membrane-spanning segments follow: residues 352–374 (VNLL…PVPL), 379–398 (TMYL…LGAL), 419–441 (LGLA…QALT), and 451–473 (VGFA…LLKL).

This sequence belongs to the AAE transporter (TC 2.A.81) family.

It localises to the cell membrane. This is an uncharacterized protein from Corynebacterium efficiens (strain DSM 44549 / YS-314 / AJ 12310 / JCM 11189 / NBRC 100395).